The following is a 137-amino-acid chain: Sporulation-specific cell division protein SsgB (137 aa).

Belongs to the SsgA family. Interacts with SsgA. Interacts with FtsZ (via N-terminus).

It is found in the cell septum. Involved in sporulation-specific cell division. Required for early stages of sporulation. Important in the process of growth cessation prior to sporulation-specific cell division. Recruits cell division protein FtsZ to the future septum sites and tethers the contractile ring structure (Z ring) to the cytoplasmic membrane during sporulation. Stimulates polymerization and filament length of FtsZ in vitro. The polypeptide is Sporulation-specific cell division protein SsgB (Streptomyces coelicolor (strain ATCC BAA-471 / A3(2) / M145)).